Here is a 274-residue protein sequence, read N- to C-terminus: Rhamnulose-1-phosphate aldolase (274 aa).

The active site involves Glu-117. Zn(2+) contacts are provided by His-141, His-143, and His-212.

The protein belongs to the aldolase class II family. RhaD subfamily. As to quaternary structure, homotetramer. Zn(2+) is required as a cofactor.

The protein resides in the cytoplasm. The enzyme catalyses L-rhamnulose 1-phosphate = (S)-lactaldehyde + dihydroxyacetone phosphate. The protein operates within carbohydrate degradation; L-rhamnose degradation; glycerone phosphate from L-rhamnose: step 3/3. In terms of biological role, catalyzes the reversible cleavage of L-rhamnulose-1-phosphate to dihydroxyacetone phosphate (DHAP) and L-lactaldehyde. The sequence is that of Rhamnulose-1-phosphate aldolase from Shigella sonnei (strain Ss046).